A 379-amino-acid polypeptide reads, in one-letter code: Stimulator of interferon genes protein (379 aa).

2 helical membrane passes run Ala-18–Glu-38 and Ile-43–Val-63. S-palmitoyl cysteine attachment occurs at residues Cys-88 and Cys-91. The next 2 membrane-spanning stretches (helical) occupy residues Leu-89–Phe-109 and His-114–Leu-134. Residues Leu-153–Glu-340 form a cyclic dinucleotide-binding domain (CBD) region. Residues Ser-162, Tyr-167, Arg-238, and Thr-263 each coordinate 2',3'-cGAMP. Residues Ser-162, Tyr-167, Arg-238–Thr-241, and Thr-263 each bind 3',3'-c-di-GMP. 3 residues coordinate 2',3'-cUAMP: Tyr-167, Arg-238, and Thr-263. A disordered region spans residues Lys-338–Leu-363. A C-terminal tail (CTT) region spans residues Glu-340–Phe-379. Position 355 is a phosphoserine (Ser-355). The pLxIS motif signature appears at Leu-363–Ser-366. At Ser-366 the chain carries Phosphoserine; by TBK1.

It belongs to the STING family. As to quaternary structure, homodimer; forms a homodimer in absence of cyclic nucleotide (c-di-GMP or cGAMP). Homotetramer; in presence of cyclic nucleotide (c-di-GMP or cGAMP), forms tetramers and higher-order oligomers through side-by-side packing. Interacts (when phosphorylated) with IRF3; following activation and phosphorylation on the pLxIS motif by TBK1, recruits IRF3. Interacts with TBK1; when homodimer, leading to subsequent production of IFN-beta. Interacts (via transmembrane domain) with TMEM203. Post-translationally, phosphorylation by TBK1 leads to activation and production of IFN-beta. Following cyclic nucleotide (c-di-GMP or cGAMP)-binding, activation and translocation from the endoplasmic reticulum, STING1 is phosphorylated by TBK1 at Ser-366 in the pLxIS motif. The phosphorylated pLxIS motif constitutes an IRF3-binding motif, leading to recruitment of the transcription factor IRF3 to induce type-I interferons and other cytokines. In contrast, lacks phosphorylation site at position 358, leading to reduced production of type-I interferons and other cytokines.

Its subcellular location is the endoplasmic reticulum membrane. It localises to the cytoplasm. The protein resides in the perinuclear region. The protein localises to the endoplasmic reticulum-Golgi intermediate compartment membrane. It is found in the golgi apparatus membrane. Its subcellular location is the cytoplasmic vesicle. It localises to the autophagosome membrane. The protein resides in the mitochondrion outer membrane. The protein localises to the cell membrane. It catalyses the reaction H(+)(in) = H(+)(out). Functionally, facilitator of innate immune signaling that acts as a sensor of cytosolic DNA from bacteria and viruses and promotes low production of type I interferon (IFN-alpha and IFN-beta). Compared to other mammals, STING1-dependent type I interferon induction is strongly reduced in bats, suggesting that the cGAS-STING pathway promotes a limited inflammatory response. Innate immune response is triggered in response to non-CpG double-stranded DNA from viruses and bacteria delivered to the cytoplasm. Acts by binding cyclic dinucleotides: recognizes and binds cyclic di-GMP (c-di-GMP), a second messenger produced by bacteria, cyclic UMP-AMP (2',3'-cUAMP), and cyclic GMP-AMP (cGAMP), a messenger produced by CGAS in response to DNA virus in the cytosol. Upon binding to c-di-GMP, cUAMP or cGAMP, STING1 oligomerizes, translocates from the endoplasmic reticulum and is phosphorylated by TBK1 on the pLxIS motif, leading to recruitment and subsequent activation of the transcription factor IRF3 to induce expression of type I interferon and exert a potent anti-viral state. In addition to promote the production of type I interferons, plays a direct role in autophagy. Following cGAMP-binding, STING1 buds from the endoplasmic reticulum into COPII vesicles, which then form the endoplasmic reticulum-Golgi intermediate compartment (ERGIC). The ERGIC serves as the membrane source for WIPI2 recruitment and LC3 lipidation, leading to formation of autophagosomes that target cytosolic DNA or DNA viruses for degradation by the lysosome. Promotes autophagy by acting as a proton channel that directs proton efflux from the Golgi to facilitate MAP1LC3B/LC3B lipidation. The autophagy- and interferon-inducing activities can be uncoupled and autophagy induction is independent of TBK1 phosphorylation. The polypeptide is Stimulator of interferon genes protein (Pteronotus parnellii (Parnell's mustached bat)).